A 259-amino-acid polypeptide reads, in one-letter code: UPF0246 protein PP_1289 (259 aa).

It belongs to the UPF0246 family.

In Pseudomonas putida (strain ATCC 47054 / DSM 6125 / CFBP 8728 / NCIMB 11950 / KT2440), this protein is UPF0246 protein PP_1289.